We begin with the raw amino-acid sequence, 279 residues long: Oxygen-dependent coproporphyrinogen-III oxidase (279 aa).

Serine 102 is a substrate binding site. A divalent metal cation contacts are provided by histidine 106 and histidine 116. Catalysis depends on histidine 116, which acts as the Proton donor. 118–120 (NTR) contacts substrate. A divalent metal cation contacts are provided by histidine 149 and histidine 179. Positions 244-279 (YVEFNLLYDRGTKFGLMTDGNIEAILMSLPPVVKFN) are important for dimerization.

The protein belongs to the aerobic coproporphyrinogen-III oxidase family. Homodimer. Requires a divalent metal cation as cofactor.

It localises to the cytoplasm. The enzyme catalyses coproporphyrinogen III + O2 + 2 H(+) = protoporphyrinogen IX + 2 CO2 + 2 H2O. The protein operates within porphyrin-containing compound metabolism; protoporphyrin-IX biosynthesis; protoporphyrinogen-IX from coproporphyrinogen-III (O2 route): step 1/1. Functionally, involved in the heme biosynthesis. Catalyzes the aerobic oxidative decarboxylation of propionate groups of rings A and B of coproporphyrinogen-III to yield the vinyl groups in protoporphyrinogen-IX. This is Oxygen-dependent coproporphyrinogen-III oxidase from Rickettsia typhi (strain ATCC VR-144 / Wilmington).